A 289-amino-acid polypeptide reads, in one-letter code: Urease accessory protein UreD (289 aa).

The protein belongs to the UreD family. As to quaternary structure, ureD, UreF and UreG form a complex that acts as a GTP-hydrolysis-dependent molecular chaperone, activating the urease apoprotein by helping to assemble the nickel containing metallocenter of UreC. The UreE protein probably delivers the nickel.

The protein resides in the cytoplasm. Its function is as follows. Required for maturation of urease via the functional incorporation of the urease nickel metallocenter. The sequence is that of Urease accessory protein UreD from Cupriavidus pinatubonensis (strain JMP 134 / LMG 1197) (Cupriavidus necator (strain JMP 134)).